A 326-amino-acid polypeptide reads, in one-letter code: Ras association domain-containing protein 2 (326 aa).

In terms of domain architecture, Ras-associating spans 176–264 (YNHKTSVFTP…SKVFLMEKDQ (89 aa)). One can recognise an SARAH domain in the interval 272-319 (VAQYIKFEMPVLKSFIQKLQEEEDREVEKLMQKYTVLRLMIRQRLEEI).

Interacts directly with activated KRAS in a GTP-dependent manner. Interacts (via SARAH domain) with STK3/MST2 and STK4/MST1. In terms of processing, phosphorylated by STK3/MST2 and STK4/MST1.

Its subcellular location is the nucleus. The protein resides in the cytoplasm. It is found in the chromosome. It localises to the centromere. The protein localises to the kinetochore. In terms of biological role, potential tumor suppressor. Acts as a KRAS-specific effector protein. May promote apoptosis and cell cycle arrest. Stabilizes STK3/MST2 by protecting it from proteasomal degradation. This chain is Ras association domain-containing protein 2 (Rassf2), found in Rattus norvegicus (Rat).